Reading from the N-terminus, the 138-residue chain is MRTLWIMAVLLVGVEGNLLQFNKMIKIMTKKNGFPFYTSYGCYCGWGGRGKPKDATDRCCFVHDCCYEKLTDCSPKSDIYSYSWKTGVIICGEGTECEKQICECDRAAAVCFGQNLRTYKKKYMFYPDFLCTDPTEKC.

Positions methionine 1–glycine 16 are cleaved as a signal peptide. Disulfide bonds link cysteine 42-cysteine 131, cysteine 44-cysteine 60, cysteine 59-cysteine 111, cysteine 65-cysteine 138, cysteine 66-cysteine 104, cysteine 73-cysteine 97, and cysteine 91-cysteine 102. Positions 43, 45, and 47 each coordinate Ca(2+). Histidine 63 is a catalytic residue. Aspartate 64 is a binding site for Ca(2+). Aspartate 105 is an active-site residue.

Belongs to the phospholipase A2 family. Group II subfamily. D49 sub-subfamily. The cofactor is Ca(2+). Expressed by the venom gland.

Its subcellular location is the secreted. It catalyses the reaction a 1,2-diacyl-sn-glycero-3-phosphocholine + H2O = a 1-acyl-sn-glycero-3-phosphocholine + a fatty acid + H(+). Its function is as follows. Snake venom phospholipase A2 (PLA2) that displays edema-inducing activities, as well as presynaptic neurotoxicity and myotoxicity. PLA2 catalyzes the calcium-dependent hydrolysis of the 2-acyl groups in 3-sn-phosphoglycerides. The polypeptide is Basic phospholipase A2 PLA-N (Protobothrops flavoviridis (Habu)).